An 889-amino-acid chain; its full sequence is Envelope glycoprotein gp160 (889 aa).

The signal sequence occupies residues 1–22 (MGCLGNQLLIALLLLSASGIYC). Residues 23–704 (VQYVTVFYGI…TSWIKYIQYG (682 aa)) lie on the Extracellular side of the membrane. A glycan (N-linked (GlcNAc...) asparagine; by host) is linked at asparagine 37. Cysteine 44 and cysteine 57 form a disulfide bridge. Asparagine 70 and asparagine 114 each carry an N-linked (GlcNAc...) asparagine; by host glycan. 5 disulfides stabilise this stretch: cysteine 101-cysteine 226, cysteine 108-cysteine 217, cysteine 113-cysteine 175, cysteine 239-cysteine 269, and cysteine 249-cysteine 261. The tract at residues 113–174 (CNKSETDRWG…TGLEQEPMVS (62 aa)) is V1. Residues 120–145 (RWGLTGTPAPTTTQTTTTQASTTPTS) form a disordered region. The segment covering 126-145 (TPAPTTTQTTTTQASTTPTS) has biased composition (low complexity). Residues asparagine 153, asparagine 163, asparagine 178, asparagine 191, asparagine 206, asparagine 218, asparagine 250, asparagine 253, asparagine 260, asparagine 284, asparagine 290, asparagine 301, asparagine 312, asparagine 322, asparagine 377, asparagine 422, asparagine 470, asparagine 486, and asparagine 489 are each glycosylated (N-linked (GlcNAc...) asparagine; by host). The tract at residues 175–217 (CKFNMTGLKRDKKREYNETWYSRDLVCEQNSNETDSKCYMNHC) is V2. The tract at residues 317-349 (CRRPGNKTVLPVTIMSGLVFHSQPINERPKQAW) is V3. A disulfide bond links cysteine 317 and cysteine 350. Cystine bridges form between cysteine 401-cysteine 469 and cysteine 408-cysteine 442. Residues 408–442 (CKMNWFLNWVENIQNGSRWTSQNQKERQRRNYVPC) are V4. The V5 stretch occupies residues 485–492 (GNETNITM). The tract at residues 536–556 (GVFVLGFLGFLATAGSAMSAA) is fusion peptide. The segment at 599 to 615 (LQTRVTAIEKYLKDQAQ) is immunosuppression. Residues asparagine 635, asparagine 644, and asparagine 660 are each glycosylated (N-linked (GlcNAc...) asparagine; by host). Residues 648–675 (QEWEKQVNFLEANITQSLEEAQIQQEKN) adopt a coiled-coil conformation. The segment at 681–702 (KLNSWDIFGNWFDLTSWIKYIQ) is MPER; binding to GalCer. Residues 705-725 (VLIVLGVIGLRIVIYVVQMLA) traverse the membrane as a helical segment. Residues 726–889 (RLRQGYRPVF…IRQGLELTLL (164 aa)) are Cytoplasmic-facing. The YXXV motif; contains endocytosis signal signature appears at 731-734 (YRPV). Cysteine 797 is lipidated: S-palmitoyl cysteine; by host. Residues 888–889 (LL) carry the Di-leucine internalization motif motif.

The mature envelope protein (Env) consists of a homotrimer of non-covalently associated gp120-gp41 heterodimers. The resulting complex protrudes from the virus surface as a spike. Interacts with host CD4 and CCR5. Gp120 also interacts with the C-type lectins CD209/DC-SIGN and CLEC4M/DC-SIGNR (collectively referred to as DC-SIGN(R)). In terms of assembly, the mature envelope protein (Env) consists of a homotrimer of non-covalently associated gp120-gp41 heterodimers. The resulting complex protrudes from the virus surface as a spike. In terms of processing, specific enzymatic cleavages in vivo yield mature proteins. Envelope glycoproteins are synthesized as an inactive precursor that is heavily N-glycosylated and processed likely by host cell furin in the Golgi to yield the mature SU and TM proteins. The cleavage site between SU and TM requires the minimal sequence [KR]-X-[KR]-R. Post-translationally, palmitoylation of the transmembrane protein and of Env polyprotein (prior to its proteolytic cleavage) is essential for their association with host cell membrane lipid rafts. Palmitoylation is therefore required for envelope trafficking to classical lipid rafts, but not for viral replication.

Its subcellular location is the virion membrane. It is found in the host cell membrane. The protein localises to the host endosome membrane. Its function is as follows. The surface protein gp120 (SU) attaches the virus to the host lymphoid cell by binding to the primary receptor CD4. This interaction induces a structural rearrangement creating a high affinity binding site for a chemokine coreceptor like CCR5. This peculiar 2 stage receptor-interaction strategy allows gp120 to maintain the highly conserved coreceptor-binding site in a cryptic conformation, protected from neutralizing antibodies. These changes are transmitted to the transmembrane protein gp41 and are thought to activate its fusogenic potential by unmasking its fusion peptide. In terms of biological role, surface protein gp120 (SU) may target the virus to gut-associated lymphoid tissue (GALT) by binding host ITGA4/ITGB7 (alpha-4/beta-7 integrins), a complex that mediates T-cell migration to the GALT. Interaction between gp120 and ITGA4/ITGB7 would allow the virus to enter GALT early in the infection, infecting and killing most of GALT's resting CD4+ T-cells. This T-cell depletion is believed to be the major insult to the host immune system leading to AIDS. Functionally, the surface protein gp120 is a ligand for CD209/DC-SIGN and CLEC4M/DC-SIGNR, which are respectively found on dendritic cells (DCs), and on endothelial cells of liver sinusoids and lymph node sinuses. These interactions allow capture of viral particles at mucosal surfaces by these cells and subsequent transmission to permissive cells. DCs are professional antigen presenting cells, critical for host immunity by inducing specific immune responses against a broad variety of pathogens. They act as sentinels in various tissues where they take up antigen, process it, and present it to T-cells following migration to lymphoid organs. SIV subverts the migration properties of dendritic cells to gain access to CD4+ T-cells in lymph nodes. Virus transmission to permissive T-cells occurs either in trans (without DCs infection, through viral capture and transmission), or in cis (following DCs productive infection, through the usual CD4-gp120 interaction), thereby inducing a robust infection. In trans infection, bound virions remain infectious over days and it is proposed that they are not degraded, but protected in non-lysosomal acidic organelles within the DCs close to the cell membrane thus contributing to the viral infectious potential during DCs' migration from the periphery to the lymphoid tissues. On arrival at lymphoid tissues, intact virions recycle back to DCs' cell surface allowing virus transmission to CD4+ T-cells. Virion capture also seems to lead to MHC-II-restricted viral antigen presentation, and probably to the activation of SIV-specific CD4+ cells. The transmembrane protein gp41 (TM) acts as a class I viral fusion protein. Under the current model, the protein has at least 3 conformational states: pre-fusion native state, pre-hairpin intermediate state, and post-fusion hairpin state. During fusion of viral and target intracellular membranes, the coiled coil regions (heptad repeats) assume a trimer-of-hairpins structure, positioning the fusion peptide in close proximity to the C-terminal region of the ectodomain. The formation of this structure appears to drive apposition and subsequent fusion of viral and target cell membranes. Complete fusion occurs in host cell endosomes. The virus undergoes clathrin-dependent internalization long before endosomal fusion, thus minimizing the surface exposure of conserved viral epitopes during fusion and reducing the efficacy of inhibitors targeting these epitopes. Membranes fusion leads to delivery of the nucleocapsid into the cytoplasm. Its function is as follows. The envelope glycoprotein gp160 precursor down-modulates cell surface CD4 antigen by interacting with it in the endoplasmic reticulum and blocking its transport to the cell surface. In terms of biological role, the gp120-gp41 heterodimer allows rapid transcytosis of the virus through CD4 negative cells such as simple epithelial monolayers of the intestinal, rectal and endocervical epithelial barriers. Both gp120 and gp41 specifically recognize glycosphingolipids galactosyl-ceramide (GalCer) or 3' sulfo-galactosyl-ceramide (GalS) present in the lipid rafts structures of epithelial cells. Binding to these alternative receptors allows the rapid transcytosis of the virus through the epithelial cells. This transcytotic vesicle-mediated transport of virions from the apical side to the basolateral side of the epithelial cells does not involve infection of the cells themselves. The chain is Envelope glycoprotein gp160 (env) from Simian immunodeficiency virus (isolate PBj14/BCL-3) (SIV-sm).